A 406-amino-acid polypeptide reads, in one-letter code: DNA-binding transcriptional repressor Mlc (406 aa).

A DNA-binding region (H-T-H motif) is located at residues 33 to 42 (RIDLSRLAQL). Zn(2+)-binding residues include histidine 247, cysteine 257, cysteine 259, and cysteine 264.

The protein belongs to the ROK (NagC/XylR) family. As to quaternary structure, homodimer. Homotetramer. There is probably an equilibrium between the dimeric and the tetrameric form. Interacts with dephosphorylated PtsG. Mlc and PtsG EIIB domain form a complex with the 1:1 stoichiometry. Interacts with MtfA.

Its subcellular location is the cytoplasm. Its activity is regulated as follows. Activity is modulated by glucose. In the presence of glucose, is inhibited by interaction with the dephosphorylated form of PtsG, which sequesters Mlc in the inner membrane and prevents Mlc binding to its target promoters. The restriction of conformational freedom resulting from the anchoring of four ends of Mlc to the membrane could be the primary cause of its loss of DNA-binding activity in vivo. Activity is also inhibited by interaction with the Mlc titration factor A (mtfA). The inactivation mechanisms of Mlc by dephosphorylated PtsG and MtfA differ significantly. In terms of biological role, global regulator of carbohydrate metabolism. Represses the expression of several genes involved in sugar transport and utilization, in particular phosphoenolpyruvate-carbohydrate phosphotransferase system (PTS) genes. Represses expression of ptsG (EIICB(Glc)), which encodes the PTS system glucose-specific EIICB component. Also represses the expression of the manXYZ operon, encoding the mannose-specific PTS system, expression of malT, encoding the transcriptional activator of the maltose regulon, and expression of the pts operon, composed of the genes ptsH, ptsI and crr. Represses its own expression. Acts by binding to the regulatory region of the target genes. The chain is DNA-binding transcriptional repressor Mlc from Escherichia coli (strain K12).